Consider the following 590-residue polypeptide: Arginine--tRNA ligase (590 aa).

The 'HIGH' region signature appears at 132-142; it reads PNTNKPLHLGH.

The protein belongs to the class-I aminoacyl-tRNA synthetase family. As to quaternary structure, monomer.

Its subcellular location is the cytoplasm. The catalysed reaction is tRNA(Arg) + L-arginine + ATP = L-arginyl-tRNA(Arg) + AMP + diphosphate. This is Arginine--tRNA ligase from Treponema denticola (strain ATCC 35405 / DSM 14222 / CIP 103919 / JCM 8153 / KCTC 15104).